A 130-amino-acid polypeptide reads, in one-letter code: MSMQDPIADMITCIRNGQFSNKIFVIVPFSRLKENIVKVLKFEGYIINYKIKKNNNKVLKIFLKYFNGKSVIENIKRISRPSLRRYCNKRNLPIVMNNLGIAIISTSRGVMTDRIAREKGLGGEIICYVD.

This sequence belongs to the universal ribosomal protein uS8 family. Part of the 30S ribosomal subunit. Contacts proteins S5 and S12.

Its function is as follows. One of the primary rRNA binding proteins, it binds directly to 16S rRNA central domain where it helps coordinate assembly of the platform of the 30S subunit. This chain is Small ribosomal subunit protein uS8, found in Buchnera aphidicola subsp. Cinara cedri (strain Cc).